The primary structure comprises 231 residues: 2,3-bisphosphoglycerate-dependent phosphoglycerate mutase (231 aa).

Substrate-binding positions include 8 to 15 (RHGESEWN), 21 to 22 (TG), arginine 60, 87 to 90 (ERHY), lysine 98, 114 to 115 (RR), and 183 to 184 (GN). Histidine 9 functions as the Tele-phosphohistidine intermediate in the catalytic mechanism. The Proton donor/acceptor role is filled by glutamate 87.

This sequence belongs to the phosphoglycerate mutase family. BPG-dependent PGAM subfamily.

The enzyme catalyses (2R)-2-phosphoglycerate = (2R)-3-phosphoglycerate. It functions in the pathway carbohydrate degradation; glycolysis; pyruvate from D-glyceraldehyde 3-phosphate: step 3/5. Catalyzes the interconversion of 2-phosphoglycerate and 3-phosphoglycerate. This chain is 2,3-bisphosphoglycerate-dependent phosphoglycerate mutase, found in Streptococcus pyogenes serotype M49 (strain NZ131).